The chain runs to 1409 residues: Copia protein (1409 aa).

A CCHC-type zinc finger spans residues 230–247 (VKCHHCGREGHIKKDCFH). The active-site For protease activity is D292. The Integrase catalytic domain maps to 476–644 (HIKRPLFVVH…TPYEMWHNKK (169 aa)). Disordered regions lie at residues 760-780 (SKES…QTEF) and 805-851 (NESK…NDGI). Residues 827–841 (ESRESETAEHLKEIG) are compositionally biased toward basic and acidic residues.

The protein is Copia protein (GIP) of Drosophila melanogaster (Fruit fly).